The chain runs to 480 residues: Cobyric acid synthase (480 aa).

A GATase cobBQ-type domain is found at 249-436 (KLKVVVPVLT…LHGFLDSEAA (188 aa)). Cysteine 330 (nucleophile) is an active-site residue. Residue histidine 428 is part of the active site.

It belongs to the CobB/CobQ family. CobQ subfamily.

It functions in the pathway cofactor biosynthesis; adenosylcobalamin biosynthesis. Functionally, catalyzes amidations at positions B, D, E, and G on adenosylcobyrinic A,C-diamide. NH(2) groups are provided by glutamine, and one molecule of ATP is hydrogenolyzed for each amidation. This is Cobyric acid synthase from Vibrio vulnificus (strain YJ016).